The chain runs to 1148 residues: MGKRKTKEDNASEDYDANELMIVPGEKRKKLEKSGEKSATGGKKNRNFAKEKEVAKLTKQAKRKLAAVQSRKALKQTQEELFAGLAEFQLDPSKLCQLSSSTKLSKEPEKAPVFPEKLKVFSGKTKTEAKRTQQDYYPTDDESSSEEEEEEEEGDNDIEDAGNTVEVKIEPIDLDDVDEAIDGNPETNLDQIVVKREDDEESDNEDILALPTTTVINRKKVIVERSKEIQKSRAELPIFAEEMRIVEAINENLVTVVCGETGSGKTTQIPQFLYEAGYASEGELIGITEPRRVAAIAMAQRVGVELAKPDEVSYQIRYEGTRSETTNILFMTDGVLMKEMEQDVMLKKYSVILIDEAHERSMYSDVLIGMLSRIVPLRSKTARPLRLVIMSATLRLDDFTHKKLFPLLTPKVIKVDARQFPVSVHFEKRTPDDYIASAFRKTCRIHETLPPGAILVFVTGQHEVKQLITKLKKRYPVVYETDKNGEVLVKGTKEWKEKKVEAAKSIKLEDFKEETPETEDFEDVDDGLMDGDDMNERGAAEAFDDYEEFENGDGDLSDGKVENSIGAPPADCEPLYCLPLYSLLSMGKQRRVFDETPAGMRLCVISTNVAETSLTIPGVKYVIDGGFEKRRLYDSITGVSRFAVCRISQASGDQRAGRAGRISAGHAYRLYSSAVYQDFVKFADPEILSKPADQLVLHLKSMNIVKVVNFPFPSAPDEQMLESAEKRLCRLGALSESTKNGKTEARITKLGKTLAVFPLAPSYAKFIAMADQHNLMSHAILLISLLSVREPLIPVSSLRGDTPEETKELMKNVLKERRRWCSHTGARRLGDLKVLMHAASVAEQIKYNARECEKVGLRVKALVEARKLRQQLTNIVNASCKKEHAAALDSDLPPPTDQQAQLLRQMVVASFSDRLARRVDRSVGQEEVQKGAYETTLIKGHVFIDPCSVVFTEEPEFVIYQELVQVNEKKLMTSVCAVDKEWLSRLAESYCNYGEQDKNQEPIYDPVKDMVVKTVKVTFGPLNWELPNENRSVPHDIMMYRYFALFLLDGLVFEKLKEYTPKLLAPPSTMVKSWAKLQKRTEMLLNKLIEKEVTTRSSLKEQWLKNENWLLEEYLEWVPESVHQQISLMWPPLEDHEKTIKMGRNKKY.

Over residues 1-10 (MGKRKTKEDN) the composition is skewed to basic and acidic residues. Disordered stretches follow at residues 1–51 (MGKR…FAKE) and 101–163 (STKL…DAGN). The segment covering 138 to 160 (PTDDESSSEEEEEEEEGDNDIED) has biased composition (acidic residues). Residues 246–412 (VEAINENLVT…KLFPLLTPKV (167 aa)) form the Helicase ATP-binding domain. 259-266 (GETGSGKT) contributes to the ATP binding site. Residues 355–358 (DEAH) carry the DEAH box motif. The Helicase C-terminal domain occupies 463–703 (EVKQLITKLK…QLVLHLKSMN (241 aa)).

Belongs to the DEAD box helicase family. DEAH subfamily.

The catalysed reaction is ATP + H2O = ADP + phosphate + H(+). Probable ATP-binding RNA helicase. This Caenorhabditis elegans protein is Putative ATP-dependent RNA helicase rha-2 (rha-2).